Reading from the N-terminus, the 551-residue chain is DNA mismatch repair protein MutL (551 aa).

This sequence belongs to the DNA mismatch repair MutL/HexB family.

In terms of biological role, this protein is involved in the repair of mismatches in DNA. It is required for dam-dependent methyl-directed DNA mismatch repair. May act as a 'molecular matchmaker', a protein that promotes the formation of a stable complex between two or more DNA-binding proteins in an ATP-dependent manner without itself being part of a final effector complex. The polypeptide is DNA mismatch repair protein MutL (Thermosipho melanesiensis (strain DSM 12029 / CIP 104789 / BI429)).